Reading from the N-terminus, the 35-residue chain is Photosystem II reaction center protein T (35 aa).

The chain crosses the membrane as a helical span at residues 3–23 (ALVYTFLLVSTLGIIFFAIFF).

This sequence belongs to the PsbT family. PSII is composed of 1 copy each of membrane proteins PsbA, PsbB, PsbC, PsbD, PsbE, PsbF, PsbH, PsbI, PsbJ, PsbK, PsbL, PsbM, PsbT, PsbY, PsbZ, Psb30/Ycf12, at least 3 peripheral proteins of the oxygen-evolving complex and a large number of cofactors. It forms dimeric complexes.

It localises to the plastid. It is found in the chloroplast thylakoid membrane. Functionally, found at the monomer-monomer interface of the photosystem II (PS II) dimer, plays a role in assembly and dimerization of PSII. PSII is a light-driven water plastoquinone oxidoreductase, using light energy to abstract electrons from H(2)O, generating a proton gradient subsequently used for ATP formation. This is Photosystem II reaction center protein T from Cycas revoluta (Sago palm).